The sequence spans 181 residues: Mitochondrial pyruvate carrier-like protein (181 aa).

A run of 2 helical transmembrane segments spans residues 23-42 (YLAS…PLAA) and 52-74 (IISG…FAYR). The interval 125–154 (TGSVDSSATSTGSVDSSATSTGSVDSSAAT) is disordered.

Belongs to the mitochondrial pyruvate carrier (MPC) (TC 2.A.105) family.

The protein localises to the mitochondrion inner membrane. May mediate the uptake of pyruvate into mitochondria. In Bos taurus (Bovine), this protein is Mitochondrial pyruvate carrier-like protein.